The sequence spans 142 residues: MSHLPILLLLLLVSPGLQAAPTQTMPLKTTQVNCSNLREEIVTLLNQPPLASSNFNNLNREDQRILMKPNLRKPNLEAFQKAVKSLQNAAAIESNLKDLPVCLPTATNAATQHPIRIKDGDWNDFQMKLKFYLKTLEIKQPQ.

An N-terminal signal peptide occupies residues 1–18 (MSHLPILLLLLLVSPGLQ). Asn-33 carries an N-linked (GlcNAc...) asparagine glycan. Cysteines 34 and 102 form a disulfide.

It belongs to the IL-3 family. Monomer. In terms of tissue distribution, activated T-cells, mast cells, natural killer cells.

The protein resides in the secreted. Its function is as follows. Granulocyte/macrophage colony-stimulating factors are cytokines that act in hematopoiesis by controlling the production, differentiation, and function of 2 related white cell populations of the blood, the granulocytes and the monocytes-macrophages. In terms of biological role, this CSF induces granulocytes, macrophages, mast cells, stem cells, erythroid cells, eosinophils and megakaryocytes. The protein is Interleukin-3 (IL3) of Callithrix jacchus (White-tufted-ear marmoset).